The chain runs to 697 residues: Zinc finger and BTB domain-containing protein 24 (697 aa).

The BTB domain maps to G10 to S133. Residues N131–T142 are compositionally biased toward polar residues. 2 disordered regions span residues N131–S176 and E209–S254. Positions K159–L171 form a DNA-binding region, a.T hook. Positions A212–D245 are enriched in basic and acidic residues. C2H2-type zinc fingers lie at residues A294–H316, F322–H344, Y350–H372, F378–H400, P406–H428, F434–H456, Y462–H484, and F490–H512. The interval Q652–S697 is disordered. Residues P677–T690 are compositionally biased toward pro residues.

The protein belongs to the krueppel C2H2-type zinc-finger protein family. In terms of assembly, interacts with MN1. As to expression, widely expressed, with highest levels in naive B-cells.

The protein resides in the nucleus. May be involved in BMP2-induced transcription. This Homo sapiens (Human) protein is Zinc finger and BTB domain-containing protein 24 (ZBTB24).